The following is a 265-amino-acid chain: Tryptophan synthase alpha chain (265 aa).

Residues Glu-41 and Asp-52 each act as proton acceptor in the active site.

It belongs to the TrpA family. Tetramer of two alpha and two beta chains.

The catalysed reaction is (1S,2R)-1-C-(indol-3-yl)glycerol 3-phosphate + L-serine = D-glyceraldehyde 3-phosphate + L-tryptophan + H2O. It functions in the pathway amino-acid biosynthesis; L-tryptophan biosynthesis; L-tryptophan from chorismate: step 5/5. In terms of biological role, the alpha subunit is responsible for the aldol cleavage of indoleglycerol phosphate to indole and glyceraldehyde 3-phosphate. The sequence is that of Tryptophan synthase alpha chain from Bacillus velezensis (strain DSM 23117 / BGSC 10A6 / LMG 26770 / FZB42) (Bacillus amyloliquefaciens subsp. plantarum).